The sequence spans 133 residues: Ribosome-binding factor A (133 aa).

The protein belongs to the RbfA family. Monomer. Binds 30S ribosomal subunits, but not 50S ribosomal subunits or 70S ribosomes.

It is found in the cytoplasm. Its function is as follows. One of several proteins that assist in the late maturation steps of the functional core of the 30S ribosomal subunit. Associates with free 30S ribosomal subunits (but not with 30S subunits that are part of 70S ribosomes or polysomes). Required for efficient processing of 16S rRNA. May interact with the 5'-terminal helix region of 16S rRNA. In Bordetella parapertussis (strain 12822 / ATCC BAA-587 / NCTC 13253), this protein is Ribosome-binding factor A.